Reading from the N-terminus, the 141-residue chain is Nucleoside triphosphatase NudI (141 aa).

A Nudix hydrolase domain is found at 1–141 (MRQRTIVCPL…RKTLRLKGLL (141 aa)). Residues 38–59 (GGVEPGERIEEALRREIREELG) carry the Nudix box motif.

The protein belongs to the Nudix hydrolase family. NudI subfamily. Monomer. Mg(2+) serves as cofactor.

It catalyses the reaction a ribonucleoside 5'-triphosphate + H2O = a ribonucleoside 5'-phosphate + diphosphate + H(+). The catalysed reaction is a 2'-deoxyribonucleoside 5'-triphosphate + H2O = a 2'-deoxyribonucleoside 5'-phosphate + diphosphate + H(+). It carries out the reaction dUTP + H2O = dUMP + diphosphate + H(+). The enzyme catalyses dTTP + H2O = dTMP + diphosphate + H(+). It catalyses the reaction dCTP + H2O = dCMP + diphosphate + H(+). In terms of biological role, catalyzes the hydrolysis of nucleoside triphosphates, with a preference for pyrimidine deoxynucleoside triphosphates (dUTP, dTTP and dCTP). The sequence is that of Nucleoside triphosphatase NudI from Escherichia coli O17:K52:H18 (strain UMN026 / ExPEC).